Reading from the N-terminus, the 359-residue chain is Membrane-bound lytic murein transglycosylase C (359 aa).

Positions 1 to 16 (MKKYLALALIAPLLIS) are cleaved as a signal peptide. Cys-17 is lipidated: N-palmitoyl cysteine. Residue Cys-17 is the site of S-diacylglycerol cysteine attachment.

The protein belongs to the transglycosylase Slt family.

The protein localises to the cell outer membrane. The enzyme catalyses Exolytic cleavage of the (1-&gt;4)-beta-glycosidic linkage between N-acetylmuramic acid (MurNAc) and N-acetylglucosamine (GlcNAc) residues in peptidoglycan, from either the reducing or the non-reducing ends of the peptidoglycan chains, with concomitant formation of a 1,6-anhydrobond in the MurNAc residue.. Functionally, murein-degrading enzyme. May play a role in recycling of muropeptides during cell elongation and/or cell division. In Shigella dysenteriae serotype 1 (strain Sd197), this protein is Membrane-bound lytic murein transglycosylase C.